Consider the following 391-residue polypeptide: Glycosyltransferase afumC (391 aa).

Belongs to the afumC glycosyltransferase family.

Its pathway is secondary metabolite biosynthesis. With respect to regulation, activity is significantly decreased by addition of divalent cations such as Mg(2+), Mn(2+), Zn(2+), Ca(2+), Co(2+), Cu(2+), and Ni(2+); while Fe(2+) has little effect. Functionally, glycosyltransferase; part of the gene cluster that mediates the biosynthesis fumihopaside A, a hopane-type glucoside that enhances the thermotolerance and UV resistance of N.fumigata. The first step of fumihopaside A biosynthesis is performed by the squalene hopane cyclase afumA that catalyzes the cyclization of 3S-oxidosqualene into the hopene 21-beta-H-hopane-3-beta,22-diol. The cytochrome P450 monooxygenase afumB is responsible for both hydroxylation at C-24 and oxidations at C-30 of the afumA product. The glycosyltransferase afumC then catalyzes the glycosylation at C-24, using UDP-D-glucose as a donor, to produce fumihopaside A. AfumC is also able to accept UDP-D-galactose and UDP-D-glucuronic acid as donors to yield minor derivatives. Fumihopaside B, another minor derivative produced, is different from fumihopaside A due to the presence of a double bond between C-22 and C-29. This Aspergillus fumigatus (strain CBS 144.89 / FGSC A1163 / CEA10) (Neosartorya fumigata) protein is Glycosyltransferase afumC.